A 587-amino-acid polypeptide reads, in one-letter code: Serine/threonine-protein phosphatase 2A 65 kDa regulatory subunit A gamma isoform (587 aa).

N-acetylserine is present on Ser-2. 14 HEAT repeats span residues 2-42, 44-80, 81-119, 158-194, 197-235, 236-274, 276-313, 314-352, 353-391, 393-430, 432-469, 470-508, 509-547, and 549-586; these read SMVD…ALGE, RTRKELIPFLSENNDDDDEVLLAMAEELGGFILYVGG, VEYAYVLLPPLETLSTVEETCVREKAVDSLCRIGAQMRE, DVLKTELRSIYGQLCQDDMPMVRRAAATNLGKFAATI, AHLKTDIMSMFEDLTQDDQDSVRLLAVEGCAALGKLLEP, QDCVAHILPVIVNFSQDKSWRVRYMVANQLYELCEAVGP, PTRTDLVPAYARLLCDNEAEVRIAAAGKVTKFCRILNP, ELAIQHILPCVKELSSDSSQHVRSALASVIMGMAPVLGK, DATIEHLLPIFLSLLKDEFPDVRLNIISKLDQVNQVIGI, LLSQSLLPAIVELAEDRHWRVRLAIIEYIPLLASQLGV, FFDEKLGALCMQWLQDKVHSIREAAANNLKRLAEEFGP, EWAMQHIVPQVLEMINNPHYLYRMTILRAVSLLAPVMGS, EITCSKLLPAVITASKDRVPNIKFNVAKMMQSLIPIVDQ, and VVENMIRPCLVELSEDPDVDVRYFANQALQSIDNVMMS.

It belongs to the phosphatase 2A regulatory subunit A family. As to quaternary structure, PP2A consists of a common heterodimeric core enzyme, composed of a 36 kDa catalytic subunit (subunit C) and a 65 kDa constant regulatory subunit (subunit A), that associates with a variety of regulatory subunits such as subunits B (the R2/B/PR55/B55, R3/B''/PR72/PR130/PR59 and R5/B'/B56 families). Interacts with CHIP. Interacts with SRK2E/OST1. In terms of processing, ubiquitinated. CHIP-mediated ubiquitination enhances phosphatase activity after an abiotic stress such as low temperature or darkness. As to expression, expressed ubiquitously at stable levels. However, higher protein levels in roots and flowers (at protein level).

It is found in the cytoplasm. It localises to the cytosol. Its subcellular location is the nucleus. Its function is as follows. The A subunit of protein phosphatase 2A serves as a scaffolding molecule to coordinate the assembly of the catalytic subunit and a variable regulatory B subunit. Involved during developmental process such as seedling and floral developments. Seems to act as a negative regulator of PP2A catalytic activity. In Arabidopsis thaliana (Mouse-ear cress), this protein is Serine/threonine-protein phosphatase 2A 65 kDa regulatory subunit A gamma isoform (PP2AA3).